Reading from the N-terminus, the 196-residue chain is uncharacterized protein (196 aa).

Belongs to the flavoredoxin family. The cofactor is FMN.

This is an uncharacterized protein from Aquifex aeolicus (strain VF5).